A 433-amino-acid chain; its full sequence is D-amino acid dehydrogenase (433 aa).

3 to 17 (IVVLGAGVLGVTSAW) is an FAD binding site.

This sequence belongs to the DadA oxidoreductase family. The cofactor is FAD.

It catalyses the reaction a D-alpha-amino acid + A + H2O = a 2-oxocarboxylate + AH2 + NH4(+). Its pathway is amino-acid degradation; D-alanine degradation; NH(3) and pyruvate from D-alanine: step 1/1. Functionally, oxidative deamination of D-amino acids. This Paracoccus denitrificans (strain Pd 1222) protein is D-amino acid dehydrogenase.